The following is a 274-amino-acid chain: Oxidized low-density lipoprotein receptor 1 (274 aa).

The interval Met-1 to Arg-28 is disordered. Residues Met-1–Pro-37 lie on the Cytoplasmic side of the membrane. The segment covering Asp-13–Gly-26 has biased composition (basic and acidic residues). A helical; Signal-anchor for type II membrane protein membrane pass occupies residues Ala-38–Leu-60. Cys-46 carries the S-palmitoyl cysteine lipid modification. Residues Ser-61 to Trp-150 are neck. The Extracellular segment spans residues Ser-61 to Gln-274. Residues Arg-89–Gly-142 adopt a coiled-coil conformation. An N-linked (GlcNAc...) asparagine glycan is attached at Asn-139. Intrachain disulfides connect Cys-144/Cys-155, Cys-172/Cys-264, and Cys-243/Cys-256. The region spanning His-151–Gln-265 is the C-type lectin domain.

Homodimer; disulfide-linked. May form a hexamer composed of 3 homodimers. Interacts with HSP70. N-glycosylated.

The protein resides in the cell membrane. It is found in the membrane raft. Its subcellular location is the secreted. Functionally, receptor that mediates the recognition, internalization and degradation of oxidatively modified low density lipoprotein (oxLDL) by vascular endothelial cells. OxLDL is a marker of atherosclerosis that induces vascular endothelial cell activation and dysfunction, resulting in pro-inflammatory responses, pro-oxidative conditions and apoptosis. Its association with oxLDL induces the activation of NF-kappa-B through an increased production of intracellular reactive oxygen and a variety of pro-atherogenic cellular responses including a reduction of nitric oxide (NO) release, monocyte adhesion and apoptosis. In addition to binding oxLDL, it acts as a receptor for the HSP70 protein involved in antigen cross-presentation to naive T-cells in dendritic cells, thereby participating in cell-mediated antigen cross-presentation. Also involved in inflammatory process, by acting as a leukocyte-adhesion molecule at the vascular interface in endotoxin-induced inflammation. Also acts as a receptor for advanced glycation end (AGE) products, activated platelets, monocytes, apoptotic cells and both Gram-negative and Gram-positive bacteria. In Sus scrofa (Pig), this protein is Oxidized low-density lipoprotein receptor 1 (OLR1).